The primary structure comprises 504 residues: Pup--protein ligase (504 aa).

Position 30 (Glu-30) interacts with Mg(2+). Arg-74 is an ATP binding site. Tyr-76 contributes to the Mg(2+) binding site. Catalysis depends on Asp-78, which acts as the Proton acceptor. Residue Glu-84 coordinates Mg(2+). Positions 87 and 459 each coordinate ATP.

Belongs to the Pup ligase/Pup deamidase family. Pup-conjugating enzyme subfamily.

The catalysed reaction is ATP + [prokaryotic ubiquitin-like protein]-L-glutamate + [protein]-L-lysine = ADP + phosphate + N(6)-([prokaryotic ubiquitin-like protein]-gamma-L-glutamyl)-[protein]-L-lysine.. Its pathway is protein degradation; proteasomal Pup-dependent pathway. It functions in the pathway protein modification; protein pupylation. In terms of biological role, catalyzes the covalent attachment of the prokaryotic ubiquitin-like protein modifier Pup to the proteasomal substrate proteins, thereby targeting them for proteasomal degradation. This tagging system is termed pupylation. The ligation reaction involves the side-chain carboxylate of the C-terminal glutamate of Pup and the side-chain amino group of a substrate lysine. This is Pup--protein ligase from Corynebacterium urealyticum (strain ATCC 43042 / DSM 7109).